The chain runs to 24 residues: DYE-linked aldehyde dehydrogenase, alpha chain (24 aa).

In terms of assembly, heterotetramer composed of an alpha, a beta and two gamma chains. Mo-molybdopterin cytosine dinucleotide serves as cofactor.

Functionally, active with aldehydes and formate esters as substrates. The sequence is that of DYE-linked aldehyde dehydrogenase, alpha chain from Amycolatopsis methanolica.